A 69-amino-acid polypeptide reads, in one-letter code: Large ribosomal subunit protein bL28 (69 aa).

This sequence belongs to the bacterial ribosomal protein bL28 family.

This Oleidesulfovibrio alaskensis (strain ATCC BAA-1058 / DSM 17464 / G20) (Desulfovibrio alaskensis) protein is Large ribosomal subunit protein bL28.